The sequence spans 335 residues: Eukaryotic translation initiation factor 3 subunit I (335 aa).

WD repeat units lie at residues 8–47, 50–91, 145–184, 189–228, and 286–325; these read GHER…RLGT, GHQG…KTWD, CAES…LLFN, EPDL…VMKT, and GHFG…FDFT.

This sequence belongs to the eIF-3 subunit I family. Component of the eukaryotic translation initiation factor 3 (eIF-3) complex.

The protein localises to the cytoplasm. In terms of biological role, component of the eukaryotic translation initiation factor 3 (eIF-3) complex, which is involved in protein synthesis of a specialized repertoire of mRNAs and, together with other initiation factors, stimulates binding of mRNA and methionyl-tRNAi to the 40S ribosome. The eIF-3 complex specifically targets and initiates translation of a subset of mRNAs involved in cell proliferation. In Sclerotinia sclerotiorum (strain ATCC 18683 / 1980 / Ss-1) (White mold), this protein is Eukaryotic translation initiation factor 3 subunit I (tif34).